The following is a 611-amino-acid chain: Elongation factor 1 alpha-like protein (611 aa).

2 disordered regions span residues 1-21 (MAYS…DEGE) and 105-138 (SISQ…DEKT). Ser124 bears the Phosphoserine mark. A compositionally biased stretch (basic and acidic residues) spans 126 to 138 (GERNGEEANDEKT). A tr-type G domain is found at 165–390 (LPHLSFVVLG…LENAAFKISK (226 aa)). The tract at residues 174 to 181 (GHVDAGKS) is G1. 174-181 (GHVDAGKS) is a GTP binding site. The G2 stretch occupies residues 230 to 234 (GVTVS). Positions 251–254 (DAPG) are G3. GTP-binding positions include 313 to 316 (NKMD) and 352 to 354 (SGF). The segment at 313 to 316 (NKMD) is G4. Residues 352-354 (SGF) are G5.

This sequence belongs to the TRAFAC class translation factor GTPase superfamily. Classic translation factor GTPase family. Component of the Dom34-Hbs1 complex, also named Pelota-HBS1L complex, composed of DOM34 and HBS1.

The protein resides in the cytoplasm. The enzyme catalyses GTP + H2O = GDP + phosphate + H(+). Functionally, GTPase component of the Dom34-Hbs1 complex, a complex that recognizes stalled ribosomes and triggers the No-Go Decay (NGD) pathway. The Dom34-Hbs1 complex recognizes ribosomes stalled at the 3' end of an mRNA and engages stalled ribosomes by destabilizing mRNA in the mRNA channel. Following ribosome-binding, the Pelota-HBS1L complex promotes the disassembly of stalled ribosomes, followed by degradation of damaged mRNAs as part of the NGD pathway. The Dom34-Hbs1 complex is also involved in non-functional rRNA decay. This Saccharomyces cerevisiae (strain ATCC 204508 / S288c) (Baker's yeast) protein is Elongation factor 1 alpha-like protein.